A 341-amino-acid polypeptide reads, in one-letter code: Ribosomal RNA small subunit methyltransferase C (341 aa).

Belongs to the methyltransferase superfamily. RsmC family. As to quaternary structure, monomer.

The protein resides in the cytoplasm. The enzyme catalyses guanosine(1207) in 16S rRNA + S-adenosyl-L-methionine = N(2)-methylguanosine(1207) in 16S rRNA + S-adenosyl-L-homocysteine + H(+). In terms of biological role, specifically methylates the guanine in position 1207 of 16S rRNA in the 30S particle. The polypeptide is Ribosomal RNA small subunit methyltransferase C (Shewanella halifaxensis (strain HAW-EB4)).